Here is a 134-residue protein sequence, read N- to C-terminus: Small ribosomal subunit protein uS8c (134 aa).

It belongs to the universal ribosomal protein uS8 family. In terms of assembly, part of the 30S ribosomal subunit.

It is found in the plastid. It localises to the chloroplast. Functionally, one of the primary rRNA binding proteins, it binds directly to 16S rRNA central domain where it helps coordinate assembly of the platform of the 30S subunit. The sequence is that of Small ribosomal subunit protein uS8c (rps8) from Nicotiana tabacum (Common tobacco).